Reading from the N-terminus, the 234-residue chain is Arsenate respiratory reductase iron-sulfur subunit ArrB (234 aa).

4Fe-4S ferredoxin-type domains follow at residues 3-32 (LGMV…NDGI), 48-79 (VKYT…KDKR), and 80-109 (GLTL…FNAA). [4Fe-4S] cluster-binding residues include Cys12, Cys15, Cys18, Cys22, Cys57, Cys60, Cys65, Cys69, Cys89, Cys92, Cys95, Cys99, Cys164, Cys167, Cys179, and Cys183.

Heterodimer composed of one large subunit (ArrA) and one small subunit (ArrB). The cofactor is [4Fe-4S] cluster.

It is found in the periplasm. Phosphate is a competitive inhibitor. Its function is as follows. Component of the arsenate respiratory reductase (Arr) complex, which catalyzes the reduction of arsenate (As(V)) to arsenite (As(III)). ArrB is probably the electron transfer subunit. The periplasmic localization of this complex may allow the cell to couple arsenate reduction to energy production before arsenate can be transported to the cell cytoplasm and enter the ars detoxification pathway, an energy-requiring process. The sequence is that of Arsenate respiratory reductase iron-sulfur subunit ArrB from Shewanella sp. (strain ANA-3).